Consider the following 119-residue polypeptide: Large ribosomal subunit protein uL18 (119 aa).

The segment at M1 to T20 is disordered. Residues R9–A19 are compositionally biased toward basic residues.

This sequence belongs to the universal ribosomal protein uL18 family. Part of the 50S ribosomal subunit; part of the 5S rRNA/L5/L18/L25 subcomplex. Contacts the 5S and 23S rRNAs.

Its function is as follows. This is one of the proteins that bind and probably mediate the attachment of the 5S RNA into the large ribosomal subunit, where it forms part of the central protuberance. The sequence is that of Large ribosomal subunit protein uL18 from Chlorobaculum parvum (strain DSM 263 / NCIMB 8327) (Chlorobium vibrioforme subsp. thiosulfatophilum).